The primary structure comprises 375 residues: Alcohol dehydrogenase 1 (375 aa).

Ala-1 carries the N-acetylalanine modification. Cys-46, His-68, Cys-98, Cys-101, Cys-104, Cys-112, and Cys-175 together coordinate Zn(2+). NAD(+) is bound by residues Gly-200 to Gly-205, Asp-224, Lys-229, Val-293 to Leu-295, and Arg-370.

Belongs to the zinc-containing alcohol dehydrogenase family. Class-I subfamily. Zn(2+) is required as a cofactor.

It localises to the cytoplasm. The enzyme catalyses a primary alcohol + NAD(+) = an aldehyde + NADH + H(+). It catalyses the reaction a secondary alcohol + NAD(+) = a ketone + NADH + H(+). This chain is Alcohol dehydrogenase 1, found in Pelophylax perezi (Perez's frog).